A 493-amino-acid polypeptide reads, in one-letter code: Glutamate--tRNA ligase (493 aa).

The 'HIGH' region signature appears at 10–20 (PSPTGFVHIGS). Zn(2+) contacts are provided by C114, C116, C141, and E143. A 'KMSKS' region motif is present at residues 258 to 262 (KLSKR). K261 is an ATP binding site.

The protein belongs to the class-I aminoacyl-tRNA synthetase family. Glutamate--tRNA ligase type 1 subfamily. In terms of assembly, monomer. The cofactor is Zn(2+).

The protein resides in the cytoplasm. It carries out the reaction tRNA(Glu) + L-glutamate + ATP = L-glutamyl-tRNA(Glu) + AMP + diphosphate. In terms of biological role, catalyzes the attachment of glutamate to tRNA(Glu) in a two-step reaction: glutamate is first activated by ATP to form Glu-AMP and then transferred to the acceptor end of tRNA(Glu). In Alkaliphilus metalliredigens (strain QYMF), this protein is Glutamate--tRNA ligase.